Reading from the N-terminus, the 266-residue chain is ATP synthase subunit a (266 aa).

Transmembrane regions (helical) follow at residues 38-58, 99-119, 126-146, 162-182, 191-211, and 224-244; these read KQML…LLAA, LLFS…IPLI, HVGG…AIGV, GVPV…NFLV, LFAT…GIEY, and SVLV…IMAL.

This sequence belongs to the ATPase A chain family. In terms of assembly, F-type ATPases have 2 components, CF(1) - the catalytic core - and CF(0) - the membrane proton channel. CF(1) has five subunits: alpha(3), beta(3), gamma(1), delta(1), epsilon(1). CF(0) has three main subunits: a(1), b(2) and c(9-12). The alpha and beta chains form an alternating ring which encloses part of the gamma chain. CF(1) is attached to CF(0) by a central stalk formed by the gamma and epsilon chains, while a peripheral stalk is formed by the delta and b chains.

It is found in the cell membrane. Functionally, key component of the proton channel; it plays a direct role in the translocation of protons across the membrane. This Arthrobacter sp. (strain FB24) protein is ATP synthase subunit a.